The sequence spans 565 residues: MTTKLERLIDQGVGRIPADIVLKGGSFFDLVTGEIVRSDIAIGADRIVGTSGDYRGETEIDISGRTVVPGFIDTHLHIESSLVTPHEFDRCVLPYGVTTAICDPHEIANVLGTEGIEFFLESALETIMDIRVQLSSCVPATHLETAGADLPIERLLPFRDHPKVIGLAEFMNFPGVIHKDSVCMAKLDAFQGGHIDGHAPLLSGNDLNGYLSAGIRTEHECTSAAEALEKIRKGMHILVREGSVSKDLAALIPIITERLSPYLALCTDDRNPLDIAEQGHLDHMIRTAMASGVEPLAIYRAASISAARAFGLRDRGLVAPGWRADLVVLDSLQSCRAEMVFSAGRRVSDALFATRKPVAPIGLDSVKARPVNAAHFGVPVAEGETSVIGVMPGKIITEHRRYRLPAKGNETTVDLTNDIIKVAVIERHGKNGNHANGFVQGFGLKKGAIASTVGHDSHNICVVGVNEDDMAYAANRLGEIKGGFVVVEDGKITGEIALPVAGLMSIEPYETVRDTLHHLRQAALALGATLHEPFLQLAFLPLPVIPHLKISDRGMVDVDKFALIG.

Belongs to the metallo-dependent hydrolases superfamily. Adenine deaminase family. It depends on Mn(2+) as a cofactor.

It catalyses the reaction adenine + H2O + H(+) = hypoxanthine + NH4(+). The chain is Adenine deaminase 1 from Rhizobium etli (strain ATCC 51251 / DSM 11541 / JCM 21823 / NBRC 15573 / CFN 42).